Reading from the N-terminus, the 100-residue chain is Small ribosomal subunit protein uS14 (100 aa).

The protein belongs to the universal ribosomal protein uS14 family. As to quaternary structure, part of the 30S ribosomal subunit. Contacts proteins S3 and S10.

In terms of biological role, binds 16S rRNA, required for the assembly of 30S particles and may also be responsible for determining the conformation of the 16S rRNA at the A site. In Prochlorococcus marinus (strain MIT 9211), this protein is Small ribosomal subunit protein uS14.